Here is a 574-residue protein sequence, read N- to C-terminus: Ribonuclease Y (574 aa).

The chain crosses the membrane as a helical span at residues 1–21 (MSLLDLVLLLLVLGLGGVLLL). Residues 264-327 (AVTVVPIPSD…EIARMALEEL (64 aa)) enclose the KH domain. The HD domain maps to 390-483 (VLKHSIQVAH…VAAADALSAA (94 aa)).

It belongs to the RNase Y family.

Its subcellular location is the cell membrane. Its function is as follows. Endoribonuclease that initiates mRNA decay. In Thermus thermophilus (strain ATCC 27634 / DSM 579 / HB8), this protein is Ribonuclease Y.